The sequence spans 182 residues: UPF0301 protein NMB1336 (182 aa).

Belongs to the UPF0301 (AlgH) family.

The protein is UPF0301 protein NMB1336 of Neisseria meningitidis serogroup B (strain ATCC BAA-335 / MC58).